Here is a 223-residue protein sequence, read N- to C-terminus: Deoxyribose-phosphate aldolase (223 aa).

The active-site Proton donor/acceptor is aspartate 89. The active-site Schiff-base intermediate with acetaldehyde is the lysine 152. The active-site Proton donor/acceptor is the lysine 181.

Belongs to the DeoC/FbaB aldolase family. DeoC type 1 subfamily.

It localises to the cytoplasm. The enzyme catalyses 2-deoxy-D-ribose 5-phosphate = D-glyceraldehyde 3-phosphate + acetaldehyde. The protein operates within carbohydrate degradation; 2-deoxy-D-ribose 1-phosphate degradation; D-glyceraldehyde 3-phosphate and acetaldehyde from 2-deoxy-alpha-D-ribose 1-phosphate: step 2/2. Functionally, catalyzes a reversible aldol reaction between acetaldehyde and D-glyceraldehyde 3-phosphate to generate 2-deoxy-D-ribose 5-phosphate. This is Deoxyribose-phosphate aldolase from Listeria innocua serovar 6a (strain ATCC BAA-680 / CLIP 11262).